A 323-amino-acid polypeptide reads, in one-letter code: MKTTFLDFEQPIAELEAKIEELRFVQDDSAVDISEEIERLSKKSQQLTKDLYANLSPWQVSQIARHPQRPYTLDYVAELFTDFHELHGDRAFADDLSIVGGLARFGGHPCMVIGHQKGRDTKERAARNFGMPRPEGYRKAERLMRLAEKFGLPIFTFVDTPGAYPGIGAEERGQSEAIGRNLYVMAELKTPIITTVIGEGGSGGALAIAVADTVMMLQFSTYSVISPEGCASILWKSAAKAPEAAEALGLTAHRLKALGLIDKIINEPLGGAHRDPKGMAALLRRALADSLRQFQGMSIDALRERRFERLMAYGKFKETTPGA.

Residues 39-293 (RLSKKSQQLT…RRALADSLRQ (255 aa)) enclose the CoA carboxyltransferase C-terminal domain.

This sequence belongs to the AccA family. Acetyl-CoA carboxylase is a heterohexamer composed of biotin carboxyl carrier protein (AccB), biotin carboxylase (AccC) and two subunits each of ACCase subunit alpha (AccA) and ACCase subunit beta (AccD).

It is found in the cytoplasm. The enzyme catalyses N(6)-carboxybiotinyl-L-lysyl-[protein] + acetyl-CoA = N(6)-biotinyl-L-lysyl-[protein] + malonyl-CoA. Its pathway is lipid metabolism; malonyl-CoA biosynthesis; malonyl-CoA from acetyl-CoA: step 1/1. In terms of biological role, component of the acetyl coenzyme A carboxylase (ACC) complex. First, biotin carboxylase catalyzes the carboxylation of biotin on its carrier protein (BCCP) and then the CO(2) group is transferred by the carboxyltransferase to acetyl-CoA to form malonyl-CoA. The sequence is that of Acetyl-coenzyme A carboxylase carboxyl transferase subunit alpha from Burkholderia orbicola (strain AU 1054).